The chain runs to 301 residues: Sulfate adenylyltransferase subunit 2 (301 aa).

Positions 279-301 (RQGRLIDRDEAGSMEKKKREGYF) are disordered.

The protein belongs to the PAPS reductase family. CysD subfamily. In terms of assembly, heterodimer composed of CysD, the smaller subunit, and CysN.

It carries out the reaction sulfate + ATP + H(+) = adenosine 5'-phosphosulfate + diphosphate. It participates in sulfur metabolism; hydrogen sulfide biosynthesis; sulfite from sulfate: step 1/3. Functionally, with CysN forms the ATP sulfurylase (ATPS) that catalyzes the adenylation of sulfate producing adenosine 5'-phosphosulfate (APS) and diphosphate, the first enzymatic step in sulfur assimilation pathway. APS synthesis involves the formation of a high-energy phosphoric-sulfuric acid anhydride bond driven by GTP hydrolysis by CysN coupled to ATP hydrolysis by CysD. The chain is Sulfate adenylyltransferase subunit 2 from Mesorhizobium japonicum (strain LMG 29417 / CECT 9101 / MAFF 303099) (Mesorhizobium loti (strain MAFF 303099)).